Consider the following 53-residue polypeptide: Large ribosomal subunit protein bL33 (53 aa).

Belongs to the bacterial ribosomal protein bL33 family.

The protein is Large ribosomal subunit protein bL33 of Malacoplasma penetrans (strain HF-2) (Mycoplasma penetrans).